The primary structure comprises 166 residues: Protein SprT (166 aa).

Residues Arg-19–Ala-164 form the SprT-like domain. A Zn(2+)-binding site is contributed by His-78. Glu-79 is an active-site residue. Position 82 (His-82) interacts with Zn(2+).

The protein belongs to the SprT family. Requires Zn(2+) as cofactor.

It localises to the cytoplasm. The chain is Protein SprT from Klebsiella pneumoniae (strain 342).